Consider the following 442-residue polypeptide: Histidinol dehydrogenase (442 aa).

The segment at 1-20 (MLNVTDLRGQTPSKSDIRRA) is disordered. Positions 129, 193, and 218 each coordinate NAD(+). Residues threonine 241, glutamine 263, and histidine 266 each contribute to the substrate site. Residues glutamine 263 and histidine 266 each coordinate Zn(2+). Active-site proton acceptor residues include glutamate 332 and histidine 333. 4 residues coordinate substrate: histidine 333, aspartate 366, glutamate 420, and histidine 425. Aspartate 366 is a binding site for Zn(2+). Histidine 425 serves as a coordination point for Zn(2+).

Belongs to the histidinol dehydrogenase family. Zn(2+) serves as cofactor.

The enzyme catalyses L-histidinol + 2 NAD(+) + H2O = L-histidine + 2 NADH + 3 H(+). Its pathway is amino-acid biosynthesis; L-histidine biosynthesis; L-histidine from 5-phospho-alpha-D-ribose 1-diphosphate: step 9/9. In terms of biological role, catalyzes the sequential NAD-dependent oxidations of L-histidinol to L-histidinaldehyde and then to L-histidine. In Corynebacterium glutamicum (strain ATCC 13032 / DSM 20300 / JCM 1318 / BCRC 11384 / CCUG 27702 / LMG 3730 / NBRC 12168 / NCIMB 10025 / NRRL B-2784 / 534), this protein is Histidinol dehydrogenase.